The sequence spans 361 residues: RLA class I histocompatibility antigen, alpha chain 19-1 (361 aa).

The N-terminal stretch at Met-1–Ala-24 is a signal peptide. Residues Gly-25–Ala-114 form an alpha-1 region. Topologically, residues Gly-25–Ile-308 are extracellular. Asn-110 carries an N-linked (GlcNAc...) asparagine glycan. The interval Gly-115–Ala-206 is alpha-2. 2 cysteine pairs are disulfide-bonded: Cys-125/Cys-188 and Cys-227/Cys-283. The interval Asp-207–Trp-298 is alpha-3. Positions Pro-209–Thr-297 constitute an Ig-like C1-type domain. Positions Glu-299–Ile-308 are connecting peptide. The helical transmembrane segment at Val-309–Val-329 threads the bilayer. Residues Arg-330–Pro-361 are Cytoplasmic-facing. The interval Ser-335–Pro-361 is disordered. Ser-355 and Ser-358 each carry phosphoserine.

This sequence belongs to the MHC class I family. Heterodimer of an alpha chain and a beta chain (beta-2-microglobulin).

It is found in the membrane. Functionally, involved in the presentation of foreign antigens to the immune system. The polypeptide is RLA class I histocompatibility antigen, alpha chain 19-1 (Oryctolagus cuniculus (Rabbit)).